The chain runs to 112 residues: Signal peptidase complex-like protein DTM1 (112 aa).

The N-terminal stretch at 1–25 (MGRDEMLRRSLVALAAAVVVTGVVT) is a signal peptide. 2 helical membrane passes run 33–53 (ATYGFGILAIAGVLLPDWEFF) and 92–112 (MAMLTTIYGFGLYKWWMYVSS).

This sequence belongs to the SPCS1 family.

It is found in the endoplasmic reticulum membrane. Its function is as follows. Functions in tapetum development during early meiosis. May play a role in the endoplasmic reticulum (ER) membrane in the early stages of tapetum development in anthers. Seems to function after MSP1 and before UDT1. This is Signal peptidase complex-like protein DTM1 from Oryza sativa subsp. japonica (Rice).